We begin with the raw amino-acid sequence, 238 residues long: ATP synthase subunit a (238 aa).

4 helical membrane-spanning segments follow: residues 17–37 (LSNI…AIIC), 80–100 (ITLL…QIAI), 112–132 (DPIV…YYGI), and 194–214 (IFVG…SIFI).

It belongs to the ATPase A chain family. F-type ATPases have 2 components, CF(1) - the catalytic core - and CF(0) - the membrane proton channel. CF(1) has five subunits: alpha(3), beta(3), gamma(1), delta(1), epsilon(1). CF(0) has three main subunits: a(1), b(2) and c(9-12). The alpha and beta chains form an alternating ring which encloses part of the gamma chain. CF(1) is attached to CF(0) by a central stalk formed by the gamma and epsilon chains, while a peripheral stalk is formed by the delta and b chains.

It localises to the cell membrane. In terms of biological role, key component of the proton channel; it plays a direct role in the translocation of protons across the membrane. This is ATP synthase subunit a from Listeria innocua serovar 6a (strain ATCC BAA-680 / CLIP 11262).